The primary structure comprises 140 residues: Large ribosomal subunit protein bL17 (140 aa).

It belongs to the bacterial ribosomal protein bL17 family. As to quaternary structure, part of the 50S ribosomal subunit. Contacts protein L32.

The protein is Large ribosomal subunit protein bL17 of Roseobacter denitrificans (strain ATCC 33942 / OCh 114) (Erythrobacter sp. (strain OCh 114)).